A 41-amino-acid polypeptide reads, in one-letter code: Large ribosomal subunit protein bL36 (41 aa).

It belongs to the bacterial ribosomal protein bL36 family.

The sequence is that of Large ribosomal subunit protein bL36 from Phenylobacterium zucineum (strain HLK1).